Here is a 160-residue protein sequence, read N- to C-terminus: Crossover junction endodeoxyribonuclease RuvC (160 aa).

Active-site residues include D9, E68, and D141. Mg(2+) contacts are provided by D9, E68, and D141.

The protein belongs to the RuvC family. Homodimer which binds Holliday junction (HJ) DNA. The HJ becomes 2-fold symmetrical on binding to RuvC with unstacked arms; it has a different conformation from HJ DNA in complex with RuvA. In the full resolvosome a probable DNA-RuvA(4)-RuvB(12)-RuvC(2) complex forms which resolves the HJ. It depends on Mg(2+) as a cofactor.

The protein localises to the cytoplasm. The catalysed reaction is Endonucleolytic cleavage at a junction such as a reciprocal single-stranded crossover between two homologous DNA duplexes (Holliday junction).. Its function is as follows. The RuvA-RuvB-RuvC complex processes Holliday junction (HJ) DNA during genetic recombination and DNA repair. Endonuclease that resolves HJ intermediates. Cleaves cruciform DNA by making single-stranded nicks across the HJ at symmetrical positions within the homologous arms, yielding a 5'-phosphate and a 3'-hydroxyl group; requires a central core of homology in the junction. The consensus cleavage sequence is 5'-(A/T)TT(C/G)-3'. Cleavage occurs on the 3'-side of the TT dinucleotide at the point of strand exchange. HJ branch migration catalyzed by RuvA-RuvB allows RuvC to scan DNA until it finds its consensus sequence, where it cleaves and resolves the cruciform DNA. The polypeptide is Crossover junction endodeoxyribonuclease RuvC (Campylobacter jejuni subsp. jejuni serotype O:2 (strain ATCC 700819 / NCTC 11168)).